Consider the following 620-residue polypeptide: Glutathione-regulated potassium-efflux system protein KefC (620 aa).

Residues 1 to 3 (MDS) lie on the Periplasmic side of the membrane. The chain crosses the membrane as a helical span at residues 4 to 24 (HTLLQALIYLGSAALIVPIAV). Position 25 (R25) is a topological domain, cytoplasmic. The chain crosses the membrane as a helical span at residues 26–46 (LGLGSVLGYLIAGCIIGPWGL). The Periplasmic segment spans residues 47–53 (RLVTDAE). The chain crosses the membrane as a helical span at residues 54–74 (SILHFAEIGVVLMLFVIGLEL). Over 75-89 (DPQRLWKLRASVFGG) the chain is Cytoplasmic. A helical membrane pass occupies residues 90–110 (GALQMVVCGGLIGLFCMFLGL). Topologically, residues 111–113 (RWQ) are periplasmic. Residues 114–134 (VAELIGMTLALSSTAIAMQAM) form a helical membrane-spanning segment. Residues 135 to 148 (NERNLTVSQVGRSA) lie on the Cytoplasmic side of the membrane. Residues 149–169 (FAVLLFQDIAAIPLVAMIPLL) form a helical membrane-spanning segment. Topologically, residues 170–177 (AASGASTT) are periplasmic. A helical transmembrane segment spans residues 178-198 (LGAFALSALKVAGALALVVLL). At 199–213 (GRYVTRPALRFVARS) the chain is on the cytoplasmic side. A helical transmembrane segment spans residues 214 to 233 (GLREVFSAVALFLVFGFGLL). Over 234 to 236 (LEE) the chain is Periplasmic. A helical transmembrane segment spans residues 237–254 (VGLSMAMGAFLAGVLLAS). The Cytoplasmic portion of the chain corresponds to 255-269 (SEYRHALESDIEPFK). Residues 270–290 (GLLLGLFFIGVGMSIDFGTLV) traverse the membrane as a helical segment. The Periplasmic segment spans residues 291 to 293 (ENP). The chain crosses the membrane as a helical span at residues 294–314 (LRILLLLAGFLAIKIVMLWLV). The Cytoplasmic segment spans residues 315-326 (ARTLGVPAKQRR). A helical membrane pass occupies residues 327–347 (WFAVLLGQGSEFAFVVFGAAQ). At 348 to 358 (MADVLEPEWAK) the chain is on the periplasmic side. The helical transmembrane segment at 359–379 (ALTLAVALSMAATPIFLVLLT) threads the bilayer. Residues 380–620 (RMEKTATGEA…ADEPEVKPSI (241 aa)) lie on the Cytoplasmic side of the membrane. The 120-residue stretch at 399 to 518 (QPRVIVAGFG…AGVAMPERET (120 aa)) folds into the RCK N-terminal domain. A disordered region spans residues 599–620 (QGTAEGKHSGKAADEPEVKPSI). Positions 603–620 (EGKHSGKAADEPEVKPSI) are enriched in basic and acidic residues.

The protein belongs to the monovalent cation:proton antiporter 2 (CPA2) transporter (TC 2.A.37) family. KefC subfamily. Homodimer. Interacts with the regulatory subunit KefF.

It is found in the cell inner membrane. Pore-forming subunit of a potassium efflux system that confers protection against electrophiles. Catalyzes K(+)/H(+) antiport. The sequence is that of Glutathione-regulated potassium-efflux system protein KefC from Salmonella typhi.